Reading from the N-terminus, the 190-residue chain is Ribosome hibernation promotion factor (190 aa).

The tract at residues Arg-101–Gln-190 is required for ribosome-binding.

It belongs to the HPF/YfiA ribosome-associated protein family. Long HPF subfamily. In terms of assembly, interacts with 100S ribosomes during exponential growth, as 100S ribosomes decrease (after 28 hours) also found associated with 30s and 50S subunits.

It localises to the cytoplasm. Its function is as follows. Required and sufficient for dimerization of active 70S ribosomes into 100S ribosomes. 110S ribosomes are probably translationally inactive and may serve as a reservoir of easily reactivated ribosomes when necessary in the cell. Also reduces the translation efficiency of a small number of genes. Unlike E.coli, 100S ribosomes are present during exponential growth and decrease during stationary phase. This strain produces 30% fewer 100S ribosomes than strain N315 and RN4200 under the same growth conditions. In Staphylococcus aureus (strain USA300), this protein is Ribosome hibernation promotion factor.